A 288-amino-acid chain; its full sequence is 4-diphosphocytidyl-2-C-methyl-D-erythritol kinase (288 aa).

Lysine 10 is a catalytic residue. 99–109 serves as a coordination point for ATP; it reads PMGGGLGGGSS. Aspartate 141 is an active-site residue.

This sequence belongs to the GHMP kinase family. IspE subfamily. In terms of assembly, homodimer.

The enzyme catalyses 4-CDP-2-C-methyl-D-erythritol + ATP = 4-CDP-2-C-methyl-D-erythritol 2-phosphate + ADP + H(+). It functions in the pathway isoprenoid biosynthesis; isopentenyl diphosphate biosynthesis via DXP pathway; isopentenyl diphosphate from 1-deoxy-D-xylulose 5-phosphate: step 3/6. Functionally, catalyzes the phosphorylation of the position 2 hydroxy group of 4-diphosphocytidyl-2C-methyl-D-erythritol. This chain is 4-diphosphocytidyl-2-C-methyl-D-erythritol kinase, found in Serratia proteamaculans (strain 568).